Reading from the N-terminus, the 154-residue chain is 17.8 kDa class I heat shock protein (154 aa).

Residues 40–154 form the sHSP domain; it reads ESSAFANTRI…PEVKSIEISG (115 aa).

This sequence belongs to the small heat shock protein (HSP20) family. Forms oligomeric structures.

It is found in the cytoplasm. This Solanum lycopersicum (Tomato) protein is 17.8 kDa class I heat shock protein.